We begin with the raw amino-acid sequence, 258 residues long: 1-(5-phosphoribosyl)-5-[(5-phosphoribosylamino)methylideneamino] imidazole-4-carboxamide isomerase (258 aa).

The active-site Proton acceptor is Asp17. The active-site Proton donor is Asp136.

Belongs to the HisA/HisF family.

The protein localises to the cytoplasm. It catalyses the reaction 1-(5-phospho-beta-D-ribosyl)-5-[(5-phospho-beta-D-ribosylamino)methylideneamino]imidazole-4-carboxamide = 5-[(5-phospho-1-deoxy-D-ribulos-1-ylimino)methylamino]-1-(5-phospho-beta-D-ribosyl)imidazole-4-carboxamide. The protein operates within amino-acid biosynthesis; L-histidine biosynthesis; L-histidine from 5-phospho-alpha-D-ribose 1-diphosphate: step 4/9. The chain is 1-(5-phosphoribosyl)-5-[(5-phosphoribosylamino)methylideneamino] imidazole-4-carboxamide isomerase from Corynebacterium jeikeium (strain K411).